Reading from the N-terminus, the 428-residue chain is Histone deacetylase 3 (428 aa).

Residues 3–316 (KTVAYFYDPD…WTYETSLLVD (314 aa)) form a histone deacetylase region. 1D-myo-inositol 1,4,5,6-tetrakisphosphate-binding residues include H17, G21, and K25. H135 is a catalytic residue. Zn(2+) is bound by residues D170, H172, and D259. A 1D-myo-inositol 1,4,5,6-tetrakisphosphate-binding site is contributed by R265. Positions 385–428 (LSYDRTDEPDPEERGSEENYSRPEAANEFYDGDHDNDKESDVEI) are disordered. 2 stretches are compositionally biased toward basic and acidic residues: residues 386–405 (SYDR…ENYS) and 415–428 (DGDH…DVEI).

It belongs to the histone deacetylase family. HD type 1 subfamily.

It localises to the nucleus. The protein localises to the chromosome. It is found in the cytoplasm. The protein resides in the cytosol. The enzyme catalyses N(6)-acetyl-L-lysyl-[histone] + H2O = L-lysyl-[histone] + acetate. The catalysed reaction is N(6)-acetyl-L-lysyl-[protein] + H2O = L-lysyl-[protein] + acetate. It carries out the reaction N(6)-(2E)-butenoyl-L-lysyl-[protein] + H2O = (2E)-2-butenoate + L-lysyl-[protein]. It catalyses the reaction N(6)-(2-hydroxyisobutanoyl)-L-lysyl-[protein] + H2O = 2-hydroxy-2-methylpropanoate + L-lysyl-[protein]. The enzyme catalyses N(6)-[(S)-lactoyl]-L-lysyl-[protein] + H2O = (S)-lactate + L-lysyl-[protein]. With respect to regulation, inositol tetraphosphate (1D-myo-inositol 1,4,5,6-tetrakisphosphate) promotes the histone deacetylase activity by acting as an intermolecular glue between HDAC3 and N-Cor repressor complex components. In terms of biological role, histone deacetylase that catalyzes the deacetylation of lysine residues on the N-terminal part of the core histones (H2A, H2B, H3 and H4), and some other non-histone substrates. Histone deacetylation gives a tag for epigenetic repression and plays an important role in transcriptional regulation, cell cycle progression and developmental events. Histone deacetylases act via the formation of large multiprotein complexes, such as N-Cor repressor complex, which activate the histone deacetylase activity. Participates in the BCL6 transcriptional repressor activity by deacetylating the H3 'Lys-27' (H3K27) on enhancer elements, antagonizing EP300 acetyltransferase activity and repressing proximal gene expression. Also functions as a deacetylase for non-histone targets. In addition to protein deacetylase activity, also acts as a protein-lysine deacylase by recognizing other acyl groups: catalyzes removal of (2E)-butenoyl (crotonyl), lactoyl (lactyl) and 2-hydroxyisobutanoyl (2-hydroxyisobutyryl) acyl groups from lysine residues, leading to protein decrotonylation, delactylation and de-2-hydroxyisobutyrylation, respectively. This Gallus gallus (Chicken) protein is Histone deacetylase 3 (HDAC3).